The following is a 324-amino-acid chain: 4-hydroxy-2-oxoglutarate aldolase, mitochondrial (324 aa).

Residues 1–22 constitute a mitochondrion transit peptide; sequence MFAHRSFSLLCRRSAVTSWRSQ. Residue 74-75 coordinates substrate; sequence SN. The active-site Schiff-base intermediate with substrate is the Lys193. Substrate contacts are provided by Ser195 and Gly219.

Belongs to the DapA family. In terms of assembly, homotetramer.

The protein resides in the mitochondrion. It carries out the reaction (4S)-4-hydroxy-2-oxoglutarate = glyoxylate + pyruvate. The enzyme catalyses (4R)-4-hydroxy-2-oxoglutarate = glyoxylate + pyruvate. Its activity is regulated as follows. Inhibited by divalent cations. In terms of biological role, catalyzes the final step in the metabolic pathway of hydroxyproline. The protein is 4-hydroxy-2-oxoglutarate aldolase, mitochondrial of Danio rerio (Zebrafish).